We begin with the raw amino-acid sequence, 614 residues long: Vitamin B12 transporter BtuB (614 aa).

The first 20 residues, 1–20 (MIKKASLLTACSVTAFSAWA), serve as a signal peptide directing secretion. Residues 26-33 (DTLVVTAI) carry the TonB box motif. The TBDR plug domain maps to 38 to 152 (PRSTVLAPTT…IGGVVNIITT (115 aa)). Residues leucine 83, serine 85, asparagine 92, and 110–111 (VS) contribute to the cyanocob(III)alamin site. The region spanning 155–614 (EPGTEISAGW…EYTLSGSYTF (460 aa)) is the TBDR beta-barrel domain. Transmembrane regions (beta stranded) follow at residues 158–165 (TEISAGWG), 169–178 (YQNYDVSTQQ), and 184–195 (TRVTLLGDYAHT). 4 residues coordinate Ca(2+): aspartate 199, glutamine 211, aspartate 213, and aspartate 215. 2 consecutive transmembrane segments (beta stranded) span residues 217–227 (FLSKTLYGALE) and 232–248 (DAWSGFVRGYGYDNRTN). Positions 249 and 250 each coordinate Ca(2+). Alanine 251 is a cyanocob(III)alamin binding site. Aspartate 261 contacts Ca(2+). The next 14 membrane-spanning stretches (beta stranded) occupy residues 263 to 277 (RKLYSQSWDAGLRYN), 279 to 296 (ELIKSQLITSYSHSKDYN), 309 to 325 (TLDEMKQYTVQWANNVI), 328 to 337 (HGSIGAGVDW), 353 to 369 (YDQRNTGIYLTGLQQVG), 371 to 381 (FTFEGAARSDD), 385 to 400 (FGRHGTWQTSAGWEFI), 403 to 417 (YRFIASYGTSYKAPN), 434 to 443 (KSKQWEGAFE), 449 to 458 (VNWRISGYRN), 473 to 490 (YYNEGKARIKGVEATANF), 494 to 509 (PLTHTVSYDYVDARNA), 517 to 529 (RRAKQQVKYQLDW), and 535 to 550 (DWGITYQYLGTRYDKD). Cyanocob(III)alamin is bound at residue threonine 309. Arginine 517 contributes to the cyanocob(III)alamin binding site. Tyrosine 551 lines the cyanocob(III)alamin pocket. The next 3 membrane-spanning stretches (beta stranded) occupy residues 558–572 (TVKMGGVSLWDLAVA), 585–596 (IANLFDKDYETV), and 602–614 (AGREYTLSGSYTF). Positions 597–614 (YGYQTAGREYTLSGSYTF) match the TonB C-terminal box motif.

It belongs to the TonB-dependent receptor family. BtuB (TC 1.B.14.3.1) subfamily.

It is found in the cell outer membrane. Functionally, involved in the active translocation of vitamin B12 (cyanocobalamin) across the outer membrane to the periplasmic space. It derives its energy for transport by interacting with the trans-periplasmic membrane protein TonB. The polypeptide is Vitamin B12 transporter BtuB (Shigella flexneri serotype 5b (strain 8401)).